The sequence spans 420 residues: Ribosome biogenesis protein WDR12 homolog (420 aa).

The tract at residues 10 to 92 (VQVHLKTKQE…EDAIEIEYVE (83 aa)) is ubiquitin-like (UBL) domain. 7 WD repeats span residues 104–142 (LHDD…LTIS), 143–185 (GHTA…NAVD), 192–231 (GHER…GVEG), 250–288 (GHRE…IKTE), 290–329 (STNK…GSVV), 335–375 (GHNA…APLY), and 379–417 (GHGD…AEDT).

This sequence belongs to the WD repeat WDR12/YTM1 family.

Its subcellular location is the nucleus. It is found in the nucleolus. The protein resides in the nucleoplasm. Required for maturation of ribosomal RNAs and formation of the large ribosomal subunit. The protein is Ribosome biogenesis protein WDR12 homolog of Drosophila simulans (Fruit fly).